The following is a 152-amino-acid chain: Large ribosomal subunit protein bL9 (152 aa).

This sequence belongs to the bacterial ribosomal protein bL9 family.

In terms of biological role, binds to the 23S rRNA. This is Large ribosomal subunit protein bL9 from Crocosphaera subtropica (strain ATCC 51142 / BH68) (Cyanothece sp. (strain ATCC 51142)).